The chain runs to 261 residues: G patch domain-containing protein 11 (261 aa).

Disordered stretches follow at residues 1-67, 88-124, and 184-213; these read MEEE…LNEA, ALGK…AEEN, and EAWY…LVEE. Basic and acidic residues-rich tracts occupy residues 29–64 and 111–124; these read RVKE…DTKL and IGHE…AEEN. Residues 31–65 adopt a coiled-coil conformation; that stretch reads KECYEKEEKHKEANIKNRQQKLKDVEKEKRDTKLN. Residues 70–116 enclose the G-patch domain; sequence NENKGFALLQKMGYKKGQALGKKGDGIVEPIPLNIKTGRSGIGHEEM. A coiled-coil region spans residues 190–222; the sequence is KMNEQEADEEADEETEEDEDLVEEELSTLEKLQ. The span at 194–213 shows a compositional bias: acidic residues; sequence QEADEEADEETEEDEDLVEE.

This sequence belongs to the GPATCH11 family.

It is found in the chromosome. It localises to the centromere. The protein resides in the kinetochore. This chain is G patch domain-containing protein 11 (gpatch11), found in Xenopus tropicalis (Western clawed frog).